An 866-amino-acid polypeptide reads, in one-letter code: DNA mismatch repair protein MutS (866 aa).

ATP is bound at residue Gly618–Ser625.

Belongs to the DNA mismatch repair MutS family.

Functionally, this protein is involved in the repair of mismatches in DNA. It is possible that it carries out the mismatch recognition step. This protein has a weak ATPase activity. This chain is DNA mismatch repair protein MutS, found in Flavobacterium psychrophilum (strain ATCC 49511 / DSM 21280 / CIP 103535 / JIP02/86).